A 476-amino-acid chain; its full sequence is Argininosuccinate lyase (476 aa).

This sequence belongs to the lyase 1 family. Argininosuccinate lyase subfamily.

The protein localises to the cytoplasm. It catalyses the reaction 2-(N(omega)-L-arginino)succinate = fumarate + L-arginine. It participates in amino-acid biosynthesis; L-arginine biosynthesis; L-arginine from L-ornithine and carbamoyl phosphate: step 3/3. This Gluconacetobacter diazotrophicus (strain ATCC 49037 / DSM 5601 / CCUG 37298 / CIP 103539 / LMG 7603 / PAl5) protein is Argininosuccinate lyase.